Here is a 325-residue protein sequence, read N- to C-terminus: Plasminogen (325 aa).

2 consecutive Kringle domains span residues 80 to 146 (ACVK…VPSC) and 159 to 217 (LTPA…VLSV). Disulfide bonds link cysteine 81–cysteine 146, cysteine 102–cysteine 135, cysteine 124–cysteine 141, and cysteine 188–cysteine 212.

This sequence belongs to the peptidase S1 family. Plasminogen subfamily.

It is found in the secreted. It carries out the reaction Preferential cleavage: Lys-|-Xaa &gt; Arg-|-Xaa, higher selectivity than trypsin. Converts fibrin into soluble products.. In terms of biological role, plasmin dissolves the fibrin of blood clots and acts as a proteolytic factor in a variety of other processes including embryonic development, tissue remodeling, tumor invasion, and inflammation. This chain is Plasminogen, found in Petromyzon marinus (Sea lamprey).